A 346-amino-acid chain; its full sequence is MKFLDEAKVYIRSGDGGNGCVAFRREKFIEFGGPSGGNGGRGGNVIIEVADGLNTLIDYRYQQHFKAQKGENGAGSDRHGANGKNIVLKVPMGTQIFDEDRETLIHDFTNVGEKFVLAEGGNGGFGNAHFKSSTNRAPRNANPGQPGEERWIWLRLKLIADAGLVGLPNAGKSTFLSKVSAAKPKIADYPFTTLHPQLGVVNADGREFVLADIPGLIEGAHEGAGLGDRFLGHVERCRVLLHLVDATCEHAGKAYKTVRTELDAYGGLLTDKIEIVALNKIDAVEPDELKKQKDRLKRAAKKTPLLLSAATGEGVKEALRALVAVIGEAPVSAKAKSAAEAEPWSA.

The region spanning Met-1 to Ile-159 is the Obg domain. Residues Ala-160 to Gly-327 form the OBG-type G domain. Residues Gly-166–Ser-173, Phe-191–His-195, Asp-212–Gly-215, Asn-279–Asp-282, and Ser-308–Ala-310 contribute to the GTP site. Mg(2+) contacts are provided by Ser-173 and Thr-193.

It belongs to the TRAFAC class OBG-HflX-like GTPase superfamily. OBG GTPase family. As to quaternary structure, monomer. Mg(2+) serves as cofactor.

Its subcellular location is the cytoplasm. Functionally, an essential GTPase which binds GTP, GDP and possibly (p)ppGpp with moderate affinity, with high nucleotide exchange rates and a fairly low GTP hydrolysis rate. Plays a role in control of the cell cycle, stress response, ribosome biogenesis and in those bacteria that undergo differentiation, in morphogenesis control. The chain is GTPase Obg from Bradyrhizobium diazoefficiens (strain JCM 10833 / BCRC 13528 / IAM 13628 / NBRC 14792 / USDA 110).